The following is a 172-amino-acid chain: Molybdopterin synthase catalytic subunit (172 aa).

Serine 20 bears the Phosphoserine mark. Substrate contacts are provided by residues 127–128, lysine 143, and 150–152; these read HR and KKE.

It belongs to the MoaE family. MOCS2B subfamily. Heterotetramer; composed of 2 small (MOCS2A) and 2 large (MOCS2B) subunits.

The protein localises to the cytoplasm. It is found in the cytosol. It catalyses the reaction 2 [molybdopterin-synthase sulfur-carrier protein]-C-terminal-Gly-aminoethanethioate + cyclic pyranopterin phosphate + H2O = molybdopterin + 2 [molybdopterin-synthase sulfur-carrier protein]-C-terminal Gly-Gly + 2 H(+). The protein operates within cofactor biosynthesis; molybdopterin biosynthesis. In terms of biological role, catalytic subunit of the molybdopterin synthase complex, a complex that catalyzes the conversion of precursor Z into molybdopterin. Acts by mediating the incorporation of 2 sulfur atoms from thiocarboxylated MOCS2A into precursor Z to generate a dithiolene group. This chain is Molybdopterin synthase catalytic subunit, found in Pongo abelii (Sumatran orangutan).